Reading from the N-terminus, the 347-residue chain is Phosphoribosylformylglycinamidine cyclo-ligase (347 aa).

It belongs to the AIR synthase family.

The protein localises to the cytoplasm. It carries out the reaction 2-formamido-N(1)-(5-O-phospho-beta-D-ribosyl)acetamidine + ATP = 5-amino-1-(5-phospho-beta-D-ribosyl)imidazole + ADP + phosphate + H(+). The protein operates within purine metabolism; IMP biosynthesis via de novo pathway; 5-amino-1-(5-phospho-D-ribosyl)imidazole from N(2)-formyl-N(1)-(5-phospho-D-ribosyl)glycinamide: step 2/2. In Dechloromonas aromatica (strain RCB), this protein is Phosphoribosylformylglycinamidine cyclo-ligase.